Here is a 1388-residue protein sequence, read N- to C-terminus: Endoribonuclease Dicer homolog 2 (1388 aa).

Residues Ala-31–Leu-210 form the Helicase ATP-binding domain. Position 44–51 (Leu-44–Thr-51) interacts with ATP. Residues Asp-152–His-155 carry the DECH box motif. Residues Leu-380 to Leu-544 form the Helicase C-terminal domain. The Dicer dsRNA-binding fold domain maps to Ser-559–Val-645. In terms of domain architecture, PAZ spans Thr-805–Leu-935. 2 RNase III domains span residues Ala-962–Gly-1113 and Val-1149–Gly-1296. Residues Glu-1188, Asp-1282, and Glu-1285 each coordinate Mg(2+). Positions Thr-1315–Asn-1384 constitute a DRBM domain.

This sequence belongs to the helicase family. Dicer subfamily. Mg(2+) serves as cofactor. It depends on Mn(2+) as a cofactor.

It localises to the nucleus. The protein localises to the cytoplasm. Functionally, ribonuclease (RNase) III involved in RNA-mediated post-transcriptional gene silencing (PTGS). Involved in the processing of natural small interfering RNAs (nat-siRNAs, derived from cis-natural antisense transcripts) by cleaving small dsRNAs into 24 nucleotide nat-siRNAs. Plays an essential role in transitive silencing of transgenes by processing secondary siRNAs. This pathway, which requires DCL4 and RDR6, amplifies silencing by using the target RNA as substrate to generate secondary siRNAs, providing an efficient mechanism for long-distance silencing. May participate with DCL3 in the production of 24 nucleotide repeat-associated siRNAs (ra-siRNAs) which derive from heterochromatin and DNA repeats such as transposons. Plays a role in antiviral RNA silencing. Involved in the production of viral siRNAs derived from the turnip crinkle virus (TCV) and tobacco rattle virus (TRV). Targeted by the viral silencing suppressor (VSR) protein 2b of the cucumber mosaic virus (CMV) that inactivates DCL2 function in RNA silencing. Does not seem to be involved in microRNAs (miRNAs) processing. The sequence is that of Endoribonuclease Dicer homolog 2 from Arabidopsis thaliana (Mouse-ear cress).